Reading from the N-terminus, the 159-residue chain is SsrA-binding protein (159 aa).

Positions Lys-138–Arg-153 are enriched in basic and acidic residues. A disordered region spans residues Lys-138–Ala-159.

Belongs to the SmpB family.

It localises to the cytoplasm. In terms of biological role, required for rescue of stalled ribosomes mediated by trans-translation. Binds to transfer-messenger RNA (tmRNA), required for stable association of tmRNA with ribosomes. tmRNA and SmpB together mimic tRNA shape, replacing the anticodon stem-loop with SmpB. tmRNA is encoded by the ssrA gene; the 2 termini fold to resemble tRNA(Ala) and it encodes a 'tag peptide', a short internal open reading frame. During trans-translation Ala-aminoacylated tmRNA acts like a tRNA, entering the A-site of stalled ribosomes, displacing the stalled mRNA. The ribosome then switches to translate the ORF on the tmRNA; the nascent peptide is terminated with the 'tag peptide' encoded by the tmRNA and targeted for degradation. The ribosome is freed to recommence translation, which seems to be the essential function of trans-translation. The chain is SsrA-binding protein from Pseudoalteromonas translucida (strain TAC 125).